The chain runs to 318 residues: DNA-directed RNA polymerase subunit alpha (318 aa).

Residues 1–227 (MTQFEIECLD…NLFSPLKTID (227 aa)) are alpha N-terminal domain (alpha-NTD). An alpha C-terminal domain (alpha-CTD) region spans residues 241-318 (HINQILIEEL…KEKTTKIYNK (78 aa)).

This sequence belongs to the RNA polymerase alpha chain family. In plastids the minimal PEP RNA polymerase catalytic core is composed of four subunits: alpha, beta, beta', and beta''. When a (nuclear-encoded) sigma factor is associated with the core the holoenzyme is formed, which can initiate transcription.

The protein resides in the plastid. It localises to the chloroplast. It catalyses the reaction RNA(n) + a ribonucleoside 5'-triphosphate = RNA(n+1) + diphosphate. Its function is as follows. DNA-dependent RNA polymerase catalyzes the transcription of DNA into RNA using the four ribonucleoside triphosphates as substrates. This chain is DNA-directed RNA polymerase subunit alpha, found in Guillardia theta (Cryptophyte).